A 191-amino-acid polypeptide reads, in one-letter code: Large ribosomal subunit protein bL9 (191 aa).

This sequence belongs to the bacterial ribosomal protein bL9 family.

Binds to the 23S rRNA. The chain is Large ribosomal subunit protein bL9 from Granulibacter bethesdensis (strain ATCC BAA-1260 / CGDNIH1).